Here is a 109-residue protein sequence, read N- to C-terminus: V-type proton ATPase 16 kDa proteolipid subunit (109 aa).

The chain crosses the membrane as a helical span at residues 1–20 (VPVVMAGVLGIYGLIIAVII). Topologically, residues 21 to 39 (STGINPKAKPYYLFDGYAH) are lumenal. The chain crosses the membrane as a helical span at residues 40–61 (LSSGLACGLAGLAAGMAIGIVG). The Cytoplasmic segment spans residues 62 to 73 (DAGVRANAQQPK). The chain crosses the membrane as a helical span at residues 74–99 (LFVGMILILIFAEALALYGLIVGIIL). Residues 100–109 (SSRAGQSRAD) are Lumenal-facing.

The protein belongs to the V-ATPase proteolipid subunit family. In terms of assembly, V-ATPase is a heteromultimeric enzyme composed of a peripheral catalytic V1 complex (main components: subunits A, B, C, D, E, and F) attached to an integral membrane V0 proton pore complex (main component: the proteolipid protein; which is present as a hexamer that forms the proton-conducting pore). In terms of tissue distribution, high expression in the mesocotyl tip of etiolated seedlings compared to the base.

It is found in the vacuole membrane. In terms of biological role, proton-conducting pore forming subunit of the membrane integral V0 complex of vacuolar ATPase. V-ATPase is responsible for acidifying a variety of intracellular compartments in eukaryotic cells. The protein is V-type proton ATPase 16 kDa proteolipid subunit of Zea mays (Maize).